The chain runs to 84 residues: Putative membrane protein insertion efficiency factor (84 aa).

This sequence belongs to the UPF0161 family.

The protein localises to the cell inner membrane. In terms of biological role, could be involved in insertion of integral membrane proteins into the membrane. The chain is Putative membrane protein insertion efficiency factor from Nostoc sp. (strain PCC 7120 / SAG 25.82 / UTEX 2576).